The primary structure comprises 133 residues: Large ribosomal subunit protein bL19 (133 aa).

The interval 114–133 (IAERQMTAASKEEPAEKSEA) is disordered. A compositionally biased stretch (basic and acidic residues) spans 123-133 (SKEEPAEKSEA).

Belongs to the bacterial ribosomal protein bL19 family.

In terms of biological role, this protein is located at the 30S-50S ribosomal subunit interface and may play a role in the structure and function of the aminoacyl-tRNA binding site. The polypeptide is Large ribosomal subunit protein bL19 (Phenylobacterium zucineum (strain HLK1)).